The sequence spans 198 residues: Large ribosomal subunit protein bL25 (198 aa).

The protein belongs to the bacterial ribosomal protein bL25 family. CTC subfamily. In terms of assembly, part of the 50S ribosomal subunit; part of the 5S rRNA/L5/L18/L25 subcomplex. Contacts the 5S rRNA. Binds to the 5S rRNA independently of L5 and L18.

In terms of biological role, this is one of the proteins that binds to the 5S RNA in the ribosome where it forms part of the central protuberance. This chain is Large ribosomal subunit protein bL25, found in Bordetella avium (strain 197N).